The primary structure comprises 927 residues: BTB/POZ domain-containing protein KCTD19 (927 aa).

Positions 18–72 constitute a BTB 1 domain; that stretch reads NVGGWHFSVPRSKLAQFPDSLLWKEASALTSSENQRLFIDRDGSTFRHVHYYLYT. Ser-270 bears the Phosphoserine mark. Residues 399–486 enclose the BTB 2 domain; it reads IKLYVGSHWY…YHIPALSEAL (88 aa). Residues 664-760 form a disordered region; the sequence is VEEASLHVPS…NANGTDNPGA (97 aa). Residues 731-743 are compositionally biased toward basic and acidic residues; it reads DWGKQRPKDRESP.

In terms of assembly, identified in a complex with ZNF541, HDAC1 and HSPA2. Identified in a complex with ZNF541 and HDAC1. Identified in a complex with HDAC1, HDAC2, DNTTIP1 and ZNF541. Detected in adult testis.

The protein resides in the nucleus. Its function is as follows. Transcription regulator which is essential for male fertility and for the completion of meiotic prophase in spermatocytes. Regulates progression of the pachytene stage of meiotic prophase and promotes the transcriptional activation activity ZNF541. Required for the organization of chromosomes during metaphase I. The protein is BTB/POZ domain-containing protein KCTD19 (Kctd19) of Mus musculus (Mouse).